Reading from the N-terminus, the 265-residue chain is 3-methyl-2-oxobutanoate hydroxymethyltransferase (265 aa).

2 residues coordinate Mg(2+): D45 and D84. Residues 45-46 (DS), D84, and K112 contribute to the 3-methyl-2-oxobutanoate site. E114 provides a ligand contact to Mg(2+). E181 (proton acceptor) is an active-site residue.

This sequence belongs to the PanB family. As to quaternary structure, homodecamer; pentamer of dimers. Requires Mg(2+) as cofactor.

Its subcellular location is the cytoplasm. The catalysed reaction is 3-methyl-2-oxobutanoate + (6R)-5,10-methylene-5,6,7,8-tetrahydrofolate + H2O = 2-dehydropantoate + (6S)-5,6,7,8-tetrahydrofolate. It functions in the pathway cofactor biosynthesis; (R)-pantothenate biosynthesis; (R)-pantoate from 3-methyl-2-oxobutanoate: step 1/2. In terms of biological role, catalyzes the reversible reaction in which hydroxymethyl group from 5,10-methylenetetrahydrofolate is transferred onto alpha-ketoisovalerate to form ketopantoate. The chain is 3-methyl-2-oxobutanoate hydroxymethyltransferase from Pectobacterium carotovorum subsp. carotovorum (strain PC1).